We begin with the raw amino-acid sequence, 304 residues long: Ubiquitin thioesterase OTU1 (304 aa).

Residues 5-83 (RCKTREGTQL…IVEEDKSKLR (79 aa)) form a UBX-like region. An OTU domain is found at 105–230 (IVRRVVPADN…GIHYDPLQRQ (126 aa)). Positions 110–116 (VPADNSC) are cys-loop. Aspartate 113 is an active-site residue. Cysteine 116 (nucleophile) is an active-site residue. The variable-loop stretch occupies residues 169-179 (IRREDTWGGAI). Residues 219–223 (YDGIH) form a his-loop region. Residue isoleucine 222 coordinates substrate. The active site involves histidine 223. Residues 247–252 (DEALVQ) are S2 site. The segment at 274-298 (LRCMACQKGLTGQSAARDHAKETGH) adopts a C2H2-type zinc-finger fold. The active site involves histidine 298.

The protein localises to the cytoplasm. The catalysed reaction is Thiol-dependent hydrolysis of ester, thioester, amide, peptide and isopeptide bonds formed by the C-terminal Gly of ubiquitin (a 76-residue protein attached to proteins as an intracellular targeting signal).. Hydrolase that can remove conjugated ubiquitin from proteins and participates in endoplasmic reticulum-associated degradation (ERAD) for misfolded lumenal proteins. May act by triming the ubiquitin chain on the associated substrate to facilitate their threading through the VCP/p97 pore. Ubiquitin moieties on substrates may present a steric impediment to the threading process when the substrate is transferred to the VCP pore and threaded through VCP's axial channel. Mediates deubiquitination of 'Lys-27'-, 'Lys-29'- and 'Lys-33'-linked polyubiquitin chains. Also able to hydrolyze 'Lys-11'-linked ubiquitin chains. Cleaves both polyubiquitin and di-ubiquitin. The sequence is that of Ubiquitin thioesterase OTU1 (yod1) from Xenopus laevis (African clawed frog).